A 438-amino-acid polypeptide reads, in one-letter code: Ribosomal protein uS12 methylthiotransferase RimO (438 aa).

The region spanning 6–118 (KQLCLISLGC…IDILIAKKQN (113 aa)) is the MTTase N-terminal domain. Residues Cys-15, Cys-49, Cys-81, Cys-150, Cys-154, and Cys-157 each coordinate [4Fe-4S] cluster. The region spanning 136-364 (TGSSVHAYVK…NKIALKHQHN (229 aa)) is the Radical SAM core domain.

The protein belongs to the methylthiotransferase family. RimO subfamily. [4Fe-4S] cluster is required as a cofactor.

It is found in the cytoplasm. The catalysed reaction is L-aspartate(89)-[ribosomal protein uS12]-hydrogen + (sulfur carrier)-SH + AH2 + 2 S-adenosyl-L-methionine = 3-methylsulfanyl-L-aspartate(89)-[ribosomal protein uS12]-hydrogen + (sulfur carrier)-H + 5'-deoxyadenosine + L-methionine + A + S-adenosyl-L-homocysteine + 2 H(+). Its function is as follows. Catalyzes the methylthiolation of an aspartic acid residue of ribosomal protein uS12. The polypeptide is Ribosomal protein uS12 methylthiotransferase RimO (Helicobacter acinonychis (strain Sheeba)).